The primary structure comprises 135 residues: Cytochrome c oxidase subunit 2 (135 aa).

Residues H81, C116, C120, and H124 each contribute to the Cu cation site.

The protein belongs to the cytochrome c oxidase subunit 2 family.

It is found in the cell membrane. The enzyme catalyses 4 Fe(II)-[cytochrome c] + O2 + 8 H(+)(in) = 4 Fe(III)-[cytochrome c] + 2 H2O + 4 H(+)(out). Functionally, subunits I and II form the functional core of the enzyme complex. Electrons originating in cytochrome c are transferred via heme a and Cu(A) to the binuclear center formed by heme a3 and Cu(B). The protein is Cytochrome c oxidase subunit 2 (cbaB) of Thermus thermophilus.